The sequence spans 174 residues: Probable nicotinate-nucleotide adenylyltransferase (174 aa).

It belongs to the NadD family.

The enzyme catalyses nicotinate beta-D-ribonucleotide + ATP + H(+) = deamido-NAD(+) + diphosphate. The protein operates within cofactor biosynthesis; NAD(+) biosynthesis; deamido-NAD(+) from nicotinate D-ribonucleotide: step 1/1. Catalyzes the reversible adenylation of nicotinate mononucleotide (NaMN) to nicotinic acid adenine dinucleotide (NaAD). This is Probable nicotinate-nucleotide adenylyltransferase from Helicobacter pylori (strain HPAG1).